The sequence spans 132 residues: Glycine cleavage system H protein (132 aa).

Residues 24 to 106 (TVRVGLTDFA…YGAGWLLDVH (83 aa)) enclose the Lipoyl-binding domain. Lys65 is subject to N6-lipoyllysine.

The protein belongs to the GcvH family. The glycine cleavage system is composed of four proteins: P, T, L and H. (R)-lipoate serves as cofactor.

Its function is as follows. The glycine cleavage system catalyzes the degradation of glycine. The H protein shuttles the methylamine group of glycine from the P protein to the T protein. The protein is Glycine cleavage system H protein of Mycobacterium leprae (strain Br4923).